Consider the following 1475-residue polypeptide: Peroxidasin homolog (1475 aa).

Positions 1-23 (MAVRPTRRCLLALLLCFAWWAMA) are cleaved as a signal peptide. One can recognise an LRRNT domain in the interval 24 to 60 (VVASKQGAGCPSRCLCFRTTVRCMHLLLEAVPAVAPQ). 2 cysteine pairs are disulfide-bonded: Cys-33-Cys-39 and Cys-37-Cys-46. 6 LRR repeats span residues 58–81 (APQT…AFRR), 82–105 (LRSL…AFED), 107–129 (ENLK…AFKG), 130–153 (LASL…SFQH), 154–177 (LPKL…TFSQ), and 179–201 (ESMK…LWLA). The LRRCT domain occupies 189–241 (NALHCDCEILWLADLLKTYAQSGNAQAAATCEYPRRIQGRSVATITPEELNCE). Cystine bridges form between Cys-193–Cys-240, Cys-195–Cys-219, Cys-264–Cys-314, Cys-360–Cys-409, Cys-451–Cys-499, and Cys-543–Cys-591. Ig-like C2-type domains follow at residues 243–329 (PRIT…QEVT), 339–425 (PTFV…AFII), 430–517 (PQFT…LTVQ), and 518–607 (PRVT…MVLS). N-linked (GlcNAc...) asparagine glycosylation is present at Asn-387. Residues 402-425 (SDSGEYTCFASNSVDSIHATAFII) form an LRR 7 repeat. N-linked (GlcNAc...) asparagine glycans are attached at residues Asn-637, Asn-696, Asn-716, and Asn-728. 4 disulfide bridges follow: Cys-720–Cys-882, Cys-729–Cys-745, Cys-844–Cys-854, and Cys-848–Cys-872. A heme b-binding site is contributed by Asp-823. His-824 acts as the Proton acceptor in catalysis. Asp-825 lines the Ca(2+) pocket. The Ca(2+) site is built by Thr-904, Tyr-906, Asp-908, and Ser-910. A disulfide bridge links Cys-956 with Cys-967. N-linked (GlcNAc...) asparagine glycosylation is present at Asn-961. Residues Glu-977 and His-1071 each coordinate heme b. An LRR 8 repeat occupies 1148-1172 (ALDLAAINIQRGRDHGIPPYHDYRV). At Tyr-1173 the chain carries Phosphotyrosine. Cystine bridges form between Cys-1174–Cys-1231 and Cys-1272–Cys-1298. N-linked (GlcNAc...) asparagine glycosylation is present at Asn-1175. Ser-1177 is modified (phosphoserine). An LRR 9 repeat occupies 1267-1288 (LARILCDNSDNITRVQQDVFRV). Residues Asn-1277 and Asn-1364 are each glycosylated (N-linked (GlcNAc...) asparagine). A required in homotrimerization region spans residues 1312-1407 (CCEDCRTRGQ…QINSLESRLS (96 aa)). Residues 1409-1467 (TECVDDSGESHGGNTKWKKDPCTVCECKNGQITCFVEACQPAACPQPVKVEGACCPVCL) form the VWFC domain.

The protein belongs to the peroxidase family. XPO subfamily. Homotrimer; disulfide-linked. The homotrimer form is predominant. Homooligomer; disulfide-linked. Oligomerization occurs intracellularly before C-terminal proteolytic cleavage. Interacts with PXDNL; this interaction inhibits the peroxidase activity of PXDN. Ca(2+) serves as cofactor. The cofactor is heme b. Post-translationally, processed by FURIN and the proteolytic processing largely depends on the peroxidase activity of PXDN. The proteolytic cleavage occurs after intracellular homotrimerization and releases into the extracellular matrix a large, catalytically active fragment and a smaller fragment consisting primarily of the C-terminal VWFC domain. The processing enhances both peroxidase activity and sulfilimine cross-links formation. As to expression, highly expressed in the cardiovascular system. In the embryo, expressed in the corneal epithelial layer. In the adult eyes, expressed in the corneal and lens epithelium. Expressed in lung.

Its subcellular location is the secreted. It is found in the extracellular space. It localises to the extracellular matrix. The protein localises to the endoplasmic reticulum. The protein resides in the cell surface. Its subcellular location is the basement membrane. The enzyme catalyses L-lysyl-[collagen] + L-methionyl-[collagen] + H2O2 = [collagen]-L-lysyl-N-S-L-methionyl-[collagen] + 2 H2O + H(+). It catalyses the reaction bromide + H2O2 = hypobromite + H2O. It carries out the reaction L-lysyl-[collagen] + L-methionyl-[collagen] + hypobromite = [collagen]-L-lysyl-N-S-L-methionyl-[collagen] + bromide + H2O + H(+). The catalysed reaction is (5R)-5-hydroxy-L-lysyl-[collagen] + L-methionyl-[collagen] + hypobromite = [collagen]-(5R)-5-hydroxy-L-lysyl-N-S-L-methionyl-[collagen] + bromide + H2O + H(+). The enzyme catalyses (5R)-5-hydroxy-L-lysyl-[collagen] + L-methionyl-[collagen] + H2O2 = [collagen]-(5R)-5-hydroxy-L-lysyl-N-S-L-methionyl-[collagen] + 2 H2O + H(+). It catalyses the reaction L-tyrosyl-[protein] + bromide + H2O2 + H(+) = 3-bromo-L-tyrosyl-[protein] + 2 H2O. It carries out the reaction hypobromite + L-tyrosyl-[protein] + H(+) = 3-bromo-L-tyrosyl-[protein] + H2O. With respect to regulation, thiocyanate inhibits the formation of 3-bromotyrosine. Catalyzes the two-electron oxidation of bromide by hydrogen peroxide and generates hypobromite as a reactive intermediate which mediates the formation of sulfilimine cross-links between methionine and hydroxylysine residues within an uncross-linked collagen IV/COL4A1 NC1 hexamer. In turns, directly contributes to the collagen IV network-dependent fibronectin/FN and laminin assembly, which is required for full extracellular matrix (ECM)-mediated signaling. Thus, sulfilimine cross-links are essential for growth factor-induced cell proliferation and survival in endothelial cells, an event essential to basement membrane integrity. In addition, through the bromide oxidation, may promote tubulogenesis and induce angiogenesis through ERK1/2, Akt, and FAK pathways. Moreover brominates alpha2 collagen IV chain/COL4A2 at 'Tyr-1480' and leads to bromine enrichment of the basement membranes. In vitro, can also catalyze the two-electron oxidation of thiocyanate and iodide and these two substrates could effectively compete with bromide and thus inhibit the formation of sulfilimine bonds. Binds laminins. May play a role in the organization of eyeball structure and lens development during eye development. The polypeptide is Peroxidasin homolog (Mus musculus (Mouse)).